The sequence spans 357 residues: Aspartate carbamoyltransferase catalytic subunit (357 aa).

Polar residues predominate over residues 1–17; sequence MSNSIDSQSIPTISPTD. A disordered region spans residues 1 to 21; the sequence is MSNSIDSQSIPTISPTDYTKF. Residues R97 and T98 each contribute to the carbamoyl phosphate site. K125 lines the L-aspartate pocket. The carbamoyl phosphate site is built by R147, H177, and Q180. R211 and R266 together coordinate L-aspartate. Carbamoyl phosphate is bound by residues G307 and P308.

It belongs to the aspartate/ornithine carbamoyltransferase superfamily. ATCase family. Heterododecamer (2C3:3R2) of six catalytic PyrB chains organized as two trimers (C3), and six regulatory PyrI chains organized as three dimers (R2).

The catalysed reaction is carbamoyl phosphate + L-aspartate = N-carbamoyl-L-aspartate + phosphate + H(+). It participates in pyrimidine metabolism; UMP biosynthesis via de novo pathway; (S)-dihydroorotate from bicarbonate: step 2/3. In terms of biological role, catalyzes the condensation of carbamoyl phosphate and aspartate to form carbamoyl aspartate and inorganic phosphate, the committed step in the de novo pyrimidine nucleotide biosynthesis pathway. In Psychrobacter arcticus (strain DSM 17307 / VKM B-2377 / 273-4), this protein is Aspartate carbamoyltransferase catalytic subunit.